The following is a 34-amino-acid chain: Photosystem II reaction center protein M (34 aa).

The helical transmembrane segment at Gly-7–Ile-27 threads the bilayer.

It belongs to the PsbM family. As to quaternary structure, PSII is composed of 1 copy each of membrane proteins PsbA, PsbB, PsbC, PsbD, PsbE, PsbF, PsbH, PsbI, PsbJ, PsbK, PsbL, PsbM, PsbT, PsbX, PsbY, PsbZ, Psb30/Ycf12, peripheral proteins PsbO, CyanoQ (PsbQ), PsbU, PsbV and a large number of cofactors. It forms dimeric complexes.

The protein resides in the cellular thylakoid membrane. In terms of biological role, one of the components of the core complex of photosystem II (PSII). PSII is a light-driven water:plastoquinone oxidoreductase that uses light energy to abstract electrons from H(2)O, generating O(2) and a proton gradient subsequently used for ATP formation. It consists of a core antenna complex that captures photons, and an electron transfer chain that converts photonic excitation into a charge separation. This subunit is found at the monomer-monomer interface. This chain is Photosystem II reaction center protein M, found in Synechococcus sp. (strain CC9605).